We begin with the raw amino-acid sequence, 340 residues long: Photosystem II protein D1 (340 aa).

The next 3 membrane-spanning stretches (helical) occupy residues 25-42 (YIGW…LATV), 114-129 (HFFL…EWEF), and 138-152 (WIFV…AAAA). Residue His114 participates in chlorophyll a binding. Trp122 contacts pheophytin a. Residues Asp166 and Glu185 each contribute to the [CaMn4O5] cluster site. The helical transmembrane segment at 193 to 214 (FHILGVAGVFGGSLFSAMHGSL) threads the bilayer. His194 is a binding site for chlorophyll a. A quinone is bound by residues His211 and 260–261 (SF). Position 211 (His211) interacts with Fe cation. His268 serves as a coordination point for Fe cation. The helical transmembrane segment at 270–284 (FLAAWPVIGIWITSL) threads the bilayer. Positions 328, 329, 338, and 340 each coordinate [CaMn4O5] cluster.

The protein belongs to the reaction center PufL/M/PsbA/D family. In terms of assembly, PSII is composed of 1 copy each of membrane proteins PsbA, PsbB, PsbC, PsbD, PsbE, PsbF, PsbH, PsbI, PsbJ, PsbK, PsbL, PsbM, PsbT, PsbX, PsbY, PsbZ, Psb30/Ycf12, at least 3 peripheral proteins of the oxygen-evolving complex and a large number of cofactors. It forms dimeric complexes. The D1/D2 heterodimer binds P680, chlorophylls that are the primary electron donor of PSII, and subsequent electron acceptors. It shares a non-heme iron and each subunit binds pheophytin, quinone, additional chlorophylls, carotenoids and lipids. D1 provides most of the ligands for the Mn4-Ca-O5 cluster of the oxygen-evolving complex (OEC). There is also a Cl(-1) ion associated with D1 and D2, which is required for oxygen evolution. The PSII complex binds additional chlorophylls, carotenoids and specific lipids. is required as a cofactor. In terms of processing, tyr-157 forms a radical intermediate that is referred to as redox-active TyrZ, YZ or Y-Z.

The protein resides in the plastid. Its subcellular location is the chloroplast thylakoid membrane. The catalysed reaction is 2 a plastoquinone + 4 hnu + 2 H2O = 2 a plastoquinol + O2. In terms of biological role, photosystem II (PSII) is a light-driven water:plastoquinone oxidoreductase that uses light energy to abstract electrons from H(2)O, generating O(2) and a proton gradient subsequently used for ATP formation. It consists of a core antenna complex that captures photons, and an electron transfer chain that converts photonic excitation into a charge separation. The D1/D2 (PsbA/PsbD) reaction center heterodimer binds P680, the primary electron donor of PSII as well as several subsequent electron acceptors. In Amphidinium carterae (Dinoflagellate), this protein is Photosystem II protein D1.